Reading from the N-terminus, the 542-residue chain is 1,3-beta-glucanosyltransferase gas1 (542 aa).

The N-terminal stretch at 1 to 19 is a signal peptide; it reads MKFSILSLAVAGLVGLAKA. N-linked (GlcNAc...) asparagine glycosylation is present at Asn-35. Cys-70 and Cys-99 are oxidised to a cystine. Tyr-88 lines the (1,3-beta-D-glucosyl)n pocket. N-linked (GlcNAc...) asparagine glycosylation occurs at Asn-91. Residues Asn-156 and Glu-157 each contribute to the (1,3-beta-D-glucosyl)n site. Glu-157 (proton donor) is an active-site residue. N-linked (GlcNAc...) asparagine glycosylation is present at Asn-161. Residues Asp-198 and Arg-203 each coordinate (1,3-beta-D-glucosyl)n. 5 disulfide bridges follow: Cys-212/Cys-345, Cys-230/Cys-261, Cys-367/Cys-419, Cys-376/Cys-439, and Cys-395/Cys-400. Asn-249 carries N-linked (GlcNAc...) asparagine glycosylation. Glu-258 (nucleophile) is an active-site residue. An N-linked (GlcNAc...) asparagine glycan is attached at Asn-279. A (1,3-beta-D-glucosyl)n-binding site is contributed by Tyr-290. N-linked (GlcNAc...) asparagine glycosylation is found at Asn-406, Asn-484, Asn-502, and Asn-509. Positions 490–515 are disordered; the sequence is MSTSYTSGSGSSNSSGSSSNSSSKSS. A lipid anchor (GPI-anchor amidated serine) is attached at Ser-516. A propeptide spans 517–542 (removed in mature form); sequence GASSYNLNMVITFLSVVIGGTAVLFI.

This sequence belongs to the glycosyl hydrolase 72 family. Post-translationally, the GPI-anchor is attached to the protein in the endoplasmic reticulum and serves to target the protein to the cell surface. There, the glucosamine-inositol phospholipid moiety is cleaved off and the GPI-modified mannoprotein is covalently attached via its lipidless GPI glycan remnant to the 1,6-beta-glucan of the outer cell wall layer.

It is found in the secreted. The protein resides in the cell wall. The protein localises to the membrane. Functionally, splits internally a 1,3-beta-glucan molecule and transfers the newly generated reducing end (the donor) to the non-reducing end of another 1,3-beta-glucan molecule (the acceptor) forming a 1,3-beta linkage, resulting in the elongation of 1,3-beta-glucan chains in the cell wall. This chain is 1,3-beta-glucanosyltransferase gas1 (gas1), found in Schizosaccharomyces pombe (strain 972 / ATCC 24843) (Fission yeast).